The sequence spans 240 residues: Glutathione S-transferase theta-1 (240 aa).

Residues 2 to 82 (GLELYLDLLS…YLTRKYKVPD (81 aa)) form the GST N-terminal domain. Glutathione is bound by residues His40, 53–54 (KV), and 66–67 (ES). Positions 88–220 (DLQARARVDE…HEVILKAKDF (133 aa)) constitute a GST C-terminal domain.

The protein belongs to the GST superfamily. Theta family. As to quaternary structure, homodimer. As to expression, found in erythrocyte. Expressed at low levels in liver. In lung, expressed at low levels in club cells and ciliated cells at the alveolar/bronchiolar junction. Absent from epithelial cells of larger bronchioles.

The protein localises to the cytoplasm. The catalysed reaction is RX + glutathione = an S-substituted glutathione + a halide anion + H(+). Its function is as follows. Conjugation of reduced glutathione to a wide number of exogenous and endogenous hydrophobic electrophiles. Acts on 1,2-epoxy-3-(4-nitrophenoxy)propane, phenethylisothiocyanate 4-nitrobenzyl chloride and 4-nitrophenethyl bromide. Displays glutathione peroxidase activity with cumene hydroperoxide. This chain is Glutathione S-transferase theta-1 (GSTT1), found in Homo sapiens (Human).